The sequence spans 134 residues: Probable dihydroneopterin aldolase (134 aa).

Substrate-binding positions include Glu26, Tyr59, and 78–79 (IE). Lys106 serves as the catalytic Proton donor/acceptor.

It belongs to the DHNA family.

It carries out the reaction 7,8-dihydroneopterin = 6-hydroxymethyl-7,8-dihydropterin + glycolaldehyde. The protein operates within cofactor biosynthesis; tetrahydrofolate biosynthesis; 2-amino-4-hydroxy-6-hydroxymethyl-7,8-dihydropteridine diphosphate from 7,8-dihydroneopterin triphosphate: step 3/4. Catalyzes the conversion of 7,8-dihydroneopterin to 6-hydroxymethyl-7,8-dihydropterin. In Chlamydia pneumoniae (Chlamydophila pneumoniae), this protein is Probable dihydroneopterin aldolase (folB).